The chain runs to 306 residues: Golgi to ER traffic protein 2 (306 aa).

The segment covering 1 to 18 (MSEISDAEKRRILREKRQ) has biased composition (basic and acidic residues). The segment at 1–100 (MSEISDAEKR…PPGSAEQQNG (100 aa)) is disordered. Topologically, residues 1-172 (MSEISDAEKR…VEAHNIAVNK (172 aa)) are cytoplasmic. The span at 34-57 (TGQTENSFLSTESPLDSRESTYPA) shows a compositional bias: polar residues. A compositionally biased stretch (basic and acidic residues) spans 68-77 (DSTKQMDELL). Residues 78 to 90 (AKATSKTTSKASS) are compositionally biased toward low complexity. Positions 91 to 100 (PPGSAEQQNG) are enriched in polar residues. The helical transmembrane segment at 173–193 (LKSYTILVKWLFFLLPYLYYI) threads the bilayer. Residues 194–214 (THSARDPFQHNAVNYVLDRSN) are Lumenal-facing. Residues 215–234 (FFTVFTTFEIVALSVYYQLL) traverse the membrane as a helical segment. Over 235–281 (MSAEKSHNVNTLDNNSKILKLVSMVPPGLVPIPNLRGKVAQALQYWD) the chain is Cytoplasmic. The helical transmembrane segment at 282–302 (VVSMYLTDLCFAIVLAGLFQY) threads the bilayer. Residues 303-306 (YHSM) lie on the Lumenal side of the membrane.

Belongs to the GET2 family. As to quaternary structure, component of the Golgi to ER traffic (GET) complex, which is composed of GET1, GET2 and GET3. Within the complex, GET1 and GET2 form a heterotetramer which is stabilized by phosphatidylinositol binding and which binds to the GET3 homodimer.

The protein localises to the endoplasmic reticulum membrane. Its subcellular location is the golgi apparatus membrane. Required for the post-translational delivery of tail-anchored (TA) proteins to the endoplasmic reticulum. Together with GET1, acts as a membrane receptor for soluble GET3, which recognizes and selectively binds the transmembrane domain of TA proteins in the cytosol. The GET complex cooperates with the HDEL receptor ERD2 to mediate the ATP-dependent retrieval of resident ER proteins that contain a C-terminal H-D-E-L retention signal from the Golgi to the ER. The protein is Golgi to ER traffic protein 2 of Lachancea thermotolerans (strain ATCC 56472 / CBS 6340 / NRRL Y-8284) (Yeast).